Reading from the N-terminus, the 153-residue chain is Insulin-like growth factor 1 (153 aa).

Positions G49 to T77 are b. Cystine bridges form between C54–C96, C66–C109, and C95–C100. The interval G78 to T89 is c. Positions G90–A110 are a. Residues P111–A118 are d. Positions R119–M153 are cleaved as a propeptide — e peptide. The segment at S120–M153 is disordered. Basic and acidic residues predominate over residues R125–L138. Polar residues predominate over residues K139–M153.

This sequence belongs to the insulin family. In terms of assembly, forms a ternary complex with IGFR1 and ITGAV:ITGB3. Forms a ternary complex with IGFR1 and ITGA6:ITGB4. Interacts with SH2D3C isoform 2. Forms a ternary complex with IGFBP3 and ALS.

It localises to the secreted. The insulin-like growth factors, isolated from plasma, are structurally and functionally related to insulin but have a much higher growth-promoting activity. May be a physiological regulator of [1-14C]-2-deoxy-D-glucose (2DG) transport and glycogen synthesis in osteoblasts. Stimulates glucose transport in bone-derived osteoblastic (PyMS) cells and is effective at much lower concentrations than insulin, not only regarding glycogen and DNA synthesis but also with regard to enhancing glucose uptake. May play a role in synapse maturation. Ca(2+)-dependent exocytosis of IGF1 is required for sensory perception of smell in the olfactory bulb. Acts as a ligand for IGF1R. Binds to the alpha subunit of IGF1R, leading to the activation of the intrinsic tyrosine kinase activity which autophosphorylates tyrosine residues in the beta subunit thus initiating a cascade of down-stream signaling events leading to activation of the PI3K-AKT/PKB and the Ras-MAPK pathways. Binds to integrins ITGAV:ITGB3 and ITGA6:ITGB4. Its binding to integrins and subsequent ternary complex formation with integrins and IGFR1 are essential for IGF1 signaling. Induces the phosphorylation and activation of IGFR1, MAPK3/ERK1, MAPK1/ERK2 and AKT1. As part of the MAPK/ERK signaling pathway, acts as a negative regulator of apoptosis in cardiomyocytes via promotion of STUB1/CHIP-mediated ubiquitination and degradation of ICER-type isoforms of CREM. This is Insulin-like growth factor 1 from Mus musculus (Mouse).